The sequence spans 922 residues: Cell cycle and apoptosis regulator protein 2 (922 aa).

Residues 1-39 are disordered; that stretch reads MSQFKRQRINPLPGGRNFSGAASTSLLGPPPGLLTPPVA. The residue at position 35 (T35) is a Phosphothreonine. K112 carries the post-translational modification N6-acetyllysine; by KAT8. N6-methyllysine is present on K123. S124 carries the post-translational modification Phosphoserine. Disordered regions lie at residues 178–219, 280–307, 446–508, and 567–638; these read LNRF…KPRH, RIQV…PTYS, KATE…EPAV, and VSPP…RGEA. R180 carries the post-translational modification Omega-N-methylarginine. Residues 188 to 200 show a composition bias toward basic and acidic residues; it reads GRLDQGRSDDYDS. At K215 the chain carries N6-acetyllysine; by KAT8. Positions 473 to 491 are enriched in polar residues; it reads QADTSKQNTETMEATTQQD. A Phosphothreonine modification is found at T483. S568 bears the Phosphoserine mark. Basic and acidic residues predominate over residues 571–601; sequence EPEKEEAAKEDAVKEEEAVKEEAVKVSKDEV. Residues 573–596 are a coiled coil; sequence EKEEAAKEDAVKEEEAVKEEAVKV. Residue K590 forms a Glycyl lysine isopeptide (Lys-Gly) (interchain with G-Cter in SUMO2 and SUMO3); alternate linkage. A Glycyl lysine isopeptide (Lys-Gly) (interchain with G-Cter in SUMO2); alternate cross-link involves residue K590. The segment at 609-669 is interaction with MCC; the sequence is ESDSPLKEDG…DEFAGAKLEE (61 aa). Phosphoserine is present on residues S612, S626, S674, S677, and S680. A Phosphotyrosine modification is found at Y684. A phosphoserine mark is found at S686 and S807. Residues 703-922 are interaction with NR1D1; it reads DCLLAFVFFD…VEKEEPTPSN (220 aa). A coiled-coil region spans residues 828–898; sequence LENKIHTLEL…QDFRRRLTPL (71 aa). T896 is modified (phosphothreonine).

Component of the DBIRD complex. Interacts with ZNF326/ZIRD; the interaction is direct. Interacts (via N-terminus) with SIRT1, which inhibits the deacetylation of substrates. Interacts (via N-terminus) with SUV39H1; this interaction abolishes the interaction with SIRT1. Component of a nuclear receptor-mediated transcription complex composed of at least ZNF335, CCAR2 and EMSY; the complex stimulates the transcription of nuclear receptor target genes such as SOX9 and HOXA1. Within the complex interacts with EMSY and interacts with ZNF335 (via C-terminus). Components of this complex may associate with components of a histone methylation complex to form a complex at least composed of ZNF335, HCFC1, CCAR2, EMSY, MKI67, RBBP5, ASH2L and WDR5. Within this complex, interacts with ASH2L. Interacts with NR1D1. Interacts (via N-terminus) with ESR1 and ESR2. Interacts (via N-terminus) with HDAC3 (via C-terminus). Interacts with HDAC1 and MED2F. Interacts with MCC. Interacts (via N-terminus) with NR1H2 and NR1H3 in a ligand-independent manner. Interacts with CSNK2A1. Interacts (via N-terminus) with p53/TP53. Interacts (via N-terminus) with BRCA1 (via the BRCT domains). Interacts (via N-terminus) with CHEK2 (via protein kinase domain). Interacts with PSEM3. Interacts (via N-terminus) with PSIA3 and SENP1. The sumoylated form shows a preferential interaction with SIRT1 as compared to its unmodified form. Interacts with CECR2; may form part of the CERF-1 and/or CEF-5 ISWI chromatin remodeling complexes in embryonic stem cells. In terms of processing, acetylation at Lys-112 and Lys-215 by KAT8 prevents inhibitory binding to SIRT1 and increases its deacetylase activity. Genotoxic stress induces its sumoylation and sumoylation promotes the SIRT1-CCAR2 interaction which in turn inhibits SIRT1-mediated deacetylation of p53/TP53. Sumoylation leads to transcriptional activation of p53/TP53 by sequestering SIRT1 from p53/TP53. Desumoylated by SENP1.

It is found in the nucleus. The protein localises to the cytoplasm. It localises to the cytoskeleton. Its subcellular location is the spindle. Its function is as follows. Core component of the DBIRD complex, a multiprotein complex that acts at the interface between core mRNP particles and RNA polymerase II (RNAPII) and integrates transcript elongation with the regulation of alternative splicing: the DBIRD complex affects local transcript elongation rates and alternative splicing of a large set of exons embedded in (A + T)-rich DNA regions. Inhibits SIRT1 deacetylase activity leading to increasing levels of p53/TP53 acetylation and p53-mediated apoptosis. Inhibits SUV39H1 methyltransferase activity. Mediates ligand-dependent transcriptional activation by nuclear hormone receptors. Plays a critical role in maintaining genomic stability and cellular integrity following UV-induced genotoxic stress. Regulates the circadian expression of the core clock components NR1D1 and BMAL1. Enhances the transcriptional repressor activity of NR1D1 through stabilization of NR1D1 protein levels by preventing its ubiquitination and subsequent degradation. Represses the ligand-dependent transcriptional activation function of ESR2. Acts as a regulator of PCK1 expression and gluconeogenesis by a mechanism that involves, at least in part, both NR1D1 and SIRT1. Negatively regulates the deacetylase activity of HDAC3 and can alter its subcellular localization. Positively regulates the beta-catenin pathway (canonical Wnt signaling pathway) and is required for MCC-mediated repression of the beta-catenin pathway. Represses ligand-dependent transcriptional activation function of NR1H2 and NR1H3 and inhibits the interaction of SIRT1 with NR1H3. Plays an important role in tumor suppression through p53/TP53 regulation; stabilizes p53/TP53 by affecting its interaction with ubiquitin ligase MDM2. Represses the transcriptional activator activity of BRCA1. Inhibits SIRT1 in a CHEK2 and PSEM3-dependent manner and inhibits the activity of CHEK2 in vitro. This is Cell cycle and apoptosis regulator protein 2 (Ccar2) from Mus musculus (Mouse).